Consider the following 395-residue polypeptide: Neuromedin-U receptor 2 (395 aa).

The Extracellular segment spans residues 1–41; that stretch reads MGKLENASWIHDSLMKYLNSTEEYLAYLCGPKRSDLSLPVS. N-linked (GlcNAc...) asparagine glycosylation is found at asparagine 6 and asparagine 19. A helical membrane pass occupies residues 42-62; the sequence is VVYALIFVVGVIGNLLVCLVI. Residues 63–74 are Cytoplasmic-facing; sequence ARHQTLKTPTNY. The helical transmembrane segment at 75–95 threads the bilayer; it reads YLFSLAVSDLLVLLLGMPLEV. The Extracellular segment spans residues 96 to 115; that stretch reads YELWHNYPFLFGPVGCYFKT. Residues cysteine 111 and cysteine 196 are joined by a disulfide bond. A helical membrane pass occupies residues 116–138; sequence ALFETVCFASILSVTTVSIERYV. Over 139 to 157 the chain is Cytoplasmic; sequence AIVHPFRAKLESTRRRALR. The helical transmembrane segment at 158–178 threads the bilayer; that stretch reads ILSLVWSFSVVFSLPNTSIHG. The Extracellular portion of the chain corresponds to 179–212; sequence IKFQQFPNGSSVPGSATCTVTKPIWVYNFIIQAT. Asparagine 186 carries N-linked (GlcNAc...) asparagine glycosylation. Residues 213–233 traverse the membrane as a helical segment; sequence SFLFYILPMTLISVLYYLMGL. At 234–257 the chain is on the cytoplasmic side; the sequence is RLKRDESLEADKVTVNIHRPSRKS. The chain crosses the membrane as a helical span at residues 258 to 278; the sequence is VTKMLFVLVLVFAICWTPFHV. Over 279–293 the chain is Extracellular; the sequence is DRLFFSFVDEWTESL. A helical transmembrane segment spans residues 294-314; sequence AAVFNLIHVVSGVFFYLSSAV. Residues 315 to 395 lie on the Cytoplasmic side of the membrane; sequence NPIIYNLLSR…TTVPCVEEVP (81 aa).

Belongs to the G-protein coupled receptor 1 family. Expressed primarily in brain tissues, more specifically in medulla and spinal cord. Widespread distribution in peripheral tissues.

The protein localises to the cell membrane. Receptor for the neuromedin-U and neuromedin-S neuropeptides. This is Neuromedin-U receptor 2 (Nmur2) from Mus musculus (Mouse).